The chain runs to 68 residues: Neuronal regeneration-related protein (68 aa).

As to quaternary structure, interacts with FLNA. Interacts with the latency-associated peptides (LAP) of TGFB1 and TGFB2; the interaction results in a decrease in TGFB autoinduction. Phosphorylated on Ser-59. Phosphorylation decreases stability and activity.

It is found in the cytoplasm. In terms of biological role, may have roles in neural function. Ectopic expression promotes axonal regeneration. Also augments motility of gliomas. May also have roles in cellular differentiation. Induces differentiation of fibroblast into myofibroblast and myofibroblast ameboid migration. Increases retinoic-acid regulation of lipid-droplet biogenesis. Down-regulates the expression of TGFB1 and TGFB2 but not of TGFB3. May play a role in the regulation of alveolar generation. This is Neuronal regeneration-related protein (Nrep) from Rattus norvegicus (Rat).